We begin with the raw amino-acid sequence, 362 residues long: Endolytic peptidoglycan transglycosylase RlpA (362 aa).

The first 17 residues, 1–17 (MRKQWLGICIAAGMLAA), serve as a signal peptide directing secretion. C18 is lipidated: N-palmitoyl cysteine. C18 carries the S-diacylglycerol cysteine lipid modification. The segment at 198–276 (PDLSGGAGTS…PSTTPATSPA (79 aa)) is disordered. Over residues 262–276 (PVVTAPSTTPATSPA) the composition is skewed to low complexity. One can recognise an SPOR domain in the interval 285-361 (QSASGNFMVQ…AQLQSFITTA (77 aa)).

The protein belongs to the RlpA family.

Its subcellular location is the cell membrane. Functionally, lytic transglycosylase with a strong preference for naked glycan strands that lack stem peptides. This chain is Endolytic peptidoglycan transglycosylase RlpA, found in Escherichia coli O157:H7.